Consider the following 147-residue polypeptide: Testis-expressed protein 29 (147 aa).

Over 1-57 the chain is Extracellular; that stretch reads MRYAPEFKKSPSHLLKKFAVCDIPLYDICDYNVSRDRCKELGCCFYKGICYEKAVPS. Residues 58–78 traverse the membrane as a helical segment; the sequence is YVQVFSALIVIIAGAFVITII. The Cytoplasmic segment spans residues 79–147; it reads YRVIQESRRE…IVTEEEETED (69 aa). The interval 86–147 is disordered; that stretch reads RREKEVPTEA…IVTEEEETED (62 aa). Over residues 99–108 the composition is skewed to polar residues; sequence AKSSVQVETQ. The span at 109–120 shows a compositional bias: low complexity; it reads PPSSAGAGSKAP. Residues 125–135 are compositionally biased toward basic and acidic residues; sequence PQSKESGREDA.

The protein localises to the membrane. The sequence is that of Testis-expressed protein 29 (TEX29) from Bos taurus (Bovine).